A 160-amino-acid chain; its full sequence is Surface-adhesin protein E (160 aa).

A signal peptide spans 1–15 (MKKIILTLSLGLLTA). C16 carries N-palmitoyl cysteine lipidation. A lipid anchor (S-diacylglycerol cysteine) is attached at C16.

It localises to the cell outer membrane. The protein resides in the cell surface. Its function is as follows. Acts as a multifunctional adhesin involved in direct interactions with host epithelial cells and host proteins. The polypeptide is Surface-adhesin protein E (pe) (Haemophilus influenzae (strain ATCC 51907 / DSM 11121 / KW20 / Rd)).